The chain runs to 324 residues: Concanavalin B (324 aa).

A signal peptide spans 1 to 25; it reads MGCERKALILMVVIWIMSFWTLSLA. One can recognise a GH18 domain in the interval 30 to 311; it reads TEIAVYWGQR…TNIIRYLNAT (282 aa). Asn-309 carries N-linked (GlcNAc...) asparagine glycosylation.

This sequence belongs to the glycosyl hydrolase 18 family.

Its function is as follows. May act as a carbohydrate-binding protein. The polypeptide is Concanavalin B (Canavalia ensiformis (Jack bean)).